Here is a 167-residue protein sequence, read N- to C-terminus: Sporulation membrane protein YtrI (167 aa).

A helical transmembrane segment spans residues 15 to 35 (FFAGMMCGAVISWFFFLFTYG).

Its subcellular location is the cell membrane. Functionally, involved in sporulation. This chain is Sporulation membrane protein YtrI (ytrI), found in Bacillus subtilis (strain 168).